Here is a 70-residue protein sequence, read N- to C-terminus: Small ribosomal subunit protein bS21 (70 aa).

Belongs to the bacterial ribosomal protein bS21 family.

This chain is Small ribosomal subunit protein bS21, found in Helicobacter hepaticus (strain ATCC 51449 / 3B1).